The chain runs to 250 residues: Ubiquinone/menaquinone biosynthesis C-methyltransferase UbiE (250 aa).

Residues Thr-73, Asp-94, 122 to 123 (NA), and Ser-139 contribute to the S-adenosyl-L-methionine site.

This sequence belongs to the class I-like SAM-binding methyltransferase superfamily. MenG/UbiE family.

It catalyses the reaction a 2-demethylmenaquinol + S-adenosyl-L-methionine = a menaquinol + S-adenosyl-L-homocysteine + H(+). The enzyme catalyses a 2-methoxy-6-(all-trans-polyprenyl)benzene-1,4-diol + S-adenosyl-L-methionine = a 5-methoxy-2-methyl-3-(all-trans-polyprenyl)benzene-1,4-diol + S-adenosyl-L-homocysteine + H(+). It functions in the pathway quinol/quinone metabolism; menaquinone biosynthesis; menaquinol from 1,4-dihydroxy-2-naphthoate: step 2/2. The protein operates within cofactor biosynthesis; ubiquinone biosynthesis. Methyltransferase required for the conversion of demethylmenaquinol (DMKH2) to menaquinol (MKH2) and the conversion of 2-polyprenyl-6-methoxy-1,4-benzoquinol (DDMQH2) to 2-polyprenyl-3-methyl-6-methoxy-1,4-benzoquinol (DMQH2). This chain is Ubiquinone/menaquinone biosynthesis C-methyltransferase UbiE, found in Francisella philomiragia subsp. philomiragia (strain ATCC 25017 / CCUG 19701 / FSC 153 / O#319-036).